Here is a 344-residue protein sequence, read N- to C-terminus: Phenylalanine--tRNA ligase alpha subunit (344 aa).

Glu256 is a binding site for Mg(2+).

This sequence belongs to the class-II aminoacyl-tRNA synthetase family. Phe-tRNA synthetase alpha subunit type 1 subfamily. In terms of assembly, tetramer of two alpha and two beta subunits. Mg(2+) is required as a cofactor.

Its subcellular location is the cytoplasm. The enzyme catalyses tRNA(Phe) + L-phenylalanine + ATP = L-phenylalanyl-tRNA(Phe) + AMP + diphosphate + H(+). The protein is Phenylalanine--tRNA ligase alpha subunit of Onion yellows phytoplasma (strain OY-M).